We begin with the raw amino-acid sequence, 316 residues long: Homoserine kinase (316 aa).

97–107 (PHSRGLGSSAA) is an ATP binding site.

Belongs to the GHMP kinase family. Homoserine kinase subfamily.

Its subcellular location is the cytoplasm. The catalysed reaction is L-homoserine + ATP = O-phospho-L-homoserine + ADP + H(+). The protein operates within amino-acid biosynthesis; L-threonine biosynthesis; L-threonine from L-aspartate: step 4/5. Catalyzes the ATP-dependent phosphorylation of L-homoserine to L-homoserine phosphate. The polypeptide is Homoserine kinase (Mycobacterium tuberculosis (strain ATCC 25618 / H37Rv)).